Consider the following 264-residue polypeptide: Thymidylate synthase (264 aa).

Arg-21 contacts dUMP. Residue His-51 coordinates (6R)-5,10-methylene-5,6,7,8-tetrahydrofolate. Residue 126–127 coordinates dUMP; it reads RR. Cys-146 (nucleophile) is an active-site residue. Residues 166–169, Asn-177, and 207–209 contribute to the dUMP site; these read RSCD and HLY. Residue Asp-169 coordinates (6R)-5,10-methylene-5,6,7,8-tetrahydrofolate. Ala-263 contacts (6R)-5,10-methylene-5,6,7,8-tetrahydrofolate.

This sequence belongs to the thymidylate synthase family. Bacterial-type ThyA subfamily. Homodimer.

Its subcellular location is the cytoplasm. The enzyme catalyses dUMP + (6R)-5,10-methylene-5,6,7,8-tetrahydrofolate = 7,8-dihydrofolate + dTMP. The protein operates within pyrimidine metabolism; dTTP biosynthesis. Functionally, catalyzes the reductive methylation of 2'-deoxyuridine-5'-monophosphate (dUMP) to 2'-deoxythymidine-5'-monophosphate (dTMP) while utilizing 5,10-methylenetetrahydrofolate (mTHF) as the methyl donor and reductant in the reaction, yielding dihydrofolate (DHF) as a by-product. This enzymatic reaction provides an intracellular de novo source of dTMP, an essential precursor for DNA biosynthesis. The sequence is that of Thymidylate synthase from Shewanella baltica (strain OS223).